The chain runs to 579 residues: MEVNAGGVIAYISSSSSASSPASCHSEGSENSFQSSSSSVPSSPNSSNSDTNGNPKNGDLANIEGILKNDRIDCSMKTSKSSAPGMTKSHSGVTKFSGMVLLCKVCGDVASGFHYGVHACEGCKGFFRRSIQQNIQYKKCLKNENCSIMRMNRNRCQQCRFKKCLSVGMSRDAVRFGRIPKREKQRMLIEMQSAMKTMMNSQFSGHLQNDTLVEHHEQTALPAQEQLRPKPQLEQENIKSSSPPSSDFAKEEVIGMVTRAHKDTFMYNQEQQENSAESMQPQRGERIPKNMEQYNLNHDHCGNGLSSHFPCSESQQHLNGQFKGRNIMHYPNGHAICIANGHCMNFSNAYTQRVCDRVPIDGFSQNENKNSYLCNTGGRMHLVCPMSKSPYVDPHKSGHEIWEEFSMSFTPAVKEVVEFAKRIPGFRDLSQHDQVNLLKAGTFEVLMVRFASLFDAKERTVTFLSGKKYSVDDLHSMGAGDLLNSMFEFSEKLNALQLSDEEMSLFTAVVLVSADRSGIENVNSVEALQETLIRALRTLIMKNHPNEASIFTKLLLKLPDLRSLNNMHSEELLAFKVHP.

The required for phosphorylation by CSNK1E and cytoplasmic localization stretch occupies residues 1–60 (MEVNAGGVIAYISSSSSASSPASCHSEGSENSFQSSSSSVPSSPNSSNSDTNGNPKNGDL). Residues 1–99 (MEVNAGGVIA…HSGVTKFSGM (99 aa)) are modulating. The span at 13 to 54 (SSSSSASSPASCHSEGSENSFQSSSSSVPSSPNSSNSDTNGN) shows a compositional bias: low complexity. The interval 13–61 (SSSSSASSPASCHSEGSENSFQSSSSSVPSSPNSSNSDTNGNPKNGDLA) is disordered. S46 bears the Phosphoserine; by GSK3-beta mark. The nuclear receptor DNA-binding region spans 100–176 (VLLCKVCGDV…VGMSRDAVRF (77 aa)). NR C4-type zinc fingers lie at residues 103–123 (CKVC…CEGC) and 140–164 (CLKN…FKKC). 2 positions are modified to N6-acetyllysine; by KAT5: K162 and K163. Residues 222–250 (PAQEQLRPKPQLEQENIKSSSPPSSDFAK) are disordered. Residues 227-237 (LRPKPQLEQEN) are compositionally biased toward basic and acidic residues. 2 disulfides stabilise this stretch: C337-C343 and C374-C384. An NR LBD domain is found at 369-579 (KNSYLCNTGG…EELLAFKVHP (211 aa)). Residues C384 and H568 each coordinate heme. Positions 397–579 (SGHEIWEEFS…EELLAFKVHP (183 aa)) are interaction with ZNHIT1.

This sequence belongs to the nuclear hormone receptor family. NR1 subfamily. In terms of assembly, binds DNA as a monomer or a homodimer. Interacts with NCOA5 coactivator, leading to a strong increase of transcription of target genes. Interacts (via N-terminus) with KAT5. Interacts (via C-terminus) with HDAC1. Interacts with ZNHIT1. Interacts with SIAH2. In terms of processing, deacetylated by HDAC1. Acetylation and deacetylation regulate its transcriptional regulatory activity. Under more reducing intracellular redox conditions, Cys-384 is in its heme-bound state, which is optimal for recruitment of the NCOR1/HDAC3 corepressor complex and repression of target genes. When subjected to oxidative stress conditions, Cys-384 undergoes oxidation to form a disulfide bridge with Cys-374, also triggering a ligand switch that results in release of bound heme and derepression of target genes. Post-translationally, ubiquitinated by SIAH2; leading to proteasomal degradation. In terms of processing, phosphorylated by CSNK1E; phosphorylation enhances its cytoplasmic localization. Widely expressed. Expressed at high levels in the liver, adipose tissue, skeletal muscle and brain. Expression oscillates diurnally in the suprachiasmatic nucleus (SCN) of the hypothalamus as well as in peripheral tissues.

It is found in the nucleus. The protein localises to the cytoplasm. With respect to regulation, the heme-bound form can bind gaseous signaling molecules such as CO and nitric oxide (NO) and NO can reverse its transcriptional repressor activity. Transcriptional repressor which coordinates circadian rhythm and metabolic pathways in a heme-dependent manner. Integral component of the complex transcription machinery that governs circadian rhythmicity and forms a critical negative limb of the circadian clock by directly repressing the expression of core clock components BMAL1 and CLOCK. Also regulates genes involved in metabolic functions, including lipid metabolism and the inflammatory response. Acts as a receptor for heme which stimulates its interaction with the NCOR1/HDAC3 corepressor complex, enhancing transcriptional repression. Recognizes two classes of DNA response elements within the promoter of its target genes and can bind to DNA as either monomers or homodimers, depending on the nature of the response element. Binds as a monomer to a response element composed of the consensus half-site motif 5'-[A/G]GGTCA-3' preceded by an A/T-rich 5' sequence (RevRE), or as a homodimer to a direct repeat of the core motif spaced by two nuclegotides (RevDR-2). Acts as a potent competitive repressor of ROR alpha (RORA) function and also negatively regulates the expression of NR1D1. Regulates lipid and energy homeostasis in the skeletal muscle via repression of genes involved in lipid metabolism and myogenesis including: CD36, FABP3, FABP4, UCP3, SCD1 and MSTN. Regulates hepatic lipid metabolism via the repression of APOC3. Represses gene expression at a distance in macrophages by inhibiting the transcription of enhancer-derived RNAs (eRNAs). In addition to its activity as a repressor, can also act as a transcriptional activator. Acts as a transcriptional activator of the sterol regulatory element-binding protein 1 (SREBF1) and the inflammatory mediator interleukin-6 (IL6) in the skeletal muscle. Plays a role in the regulation of circadian sleep/wake cycle; essential for maintaining wakefulness during the dark phase or active period. Key regulator of skeletal muscle mitochondrial function; negatively regulates the skeletal muscle expression of core clock genes and genes involved in mitochondrial biogenesis, fatty acid beta-oxidation and lipid metabolism. May play a role in the circadian control of neutrophilic inflammation in the lung. In Homo sapiens (Human), this protein is Nuclear receptor subfamily 1 group D member 2.